A 181-amino-acid polypeptide reads, in one-letter code: Transcriptional repressor NrdR (181 aa).

Residues cysteine 3–cysteine 34 fold into a zinc finger. Residues isoleucine 49–aspartate 139 enclose the ATP-cone domain.

It belongs to the NrdR family. Zn(2+) is required as a cofactor.

Its function is as follows. Negatively regulates transcription of bacterial ribonucleotide reductase nrd genes and operons by binding to NrdR-boxes. This chain is Transcriptional repressor NrdR, found in Picosynechococcus sp. (strain ATCC 27264 / PCC 7002 / PR-6) (Agmenellum quadruplicatum).